The chain runs to 484 residues: Fork head protein homolog 1 (484 aa).

The 67-residue stretch at 76 to 142 (VTIGRNTDSL…NGAKVNFRRI (67 aa)) folds into the FHA domain. Residues 302–393 (IKPPQSYASM…RRDFLNKWNA (92 aa)) constitute a DNA-binding region (fork-head).

As to quaternary structure, interacts (via FHA domain) with ECM30, GLN3, URE2, MPH1 AND FDO1. Interacts with the origin recognition complex (ORC) composed of ORC1 to ORC6.

The protein localises to the nucleus. The protein resides in the cytoplasm. It is found in the cytosol. Transcription factor that regulates the expression of the CLB2 cluster of genes during the G2/M phase of the mitotic cell cycle. The CLB2 cluster of genes includes mitotic regulators such as CLB1, CLB2, CDC5 and CDC20 as well as SWI5 and ACE2, transcription factors required for the subsequent temporal wave of cell cycle regulated gene expression in the M/G1 phase interval. Involved in HMRa silencing. FKH1 and FKH2 associate with the coding regions of active genes and influence, in opposing ways, transcriptional elongation and termination, and coordinate early transcription elongation and pre-mRNA processing. Both FKH1 and FKH2 play a role as regulators of lifespan in collaboration with the anaphase-promoting complex (APC), likely through combined regulation of stress response, genomic stability, and cell cycle regulation. FKH1 and FKH2 function also in controlling yeast cell morphology by preventing preudohyphal growth. Acts as a rate-limiting replication origin activator via its interaction with the origin recognition complex (ORC). Plays a transcription-independent role in recombination donor preference during mating-type switching through binding to the recombination enhancer (RE), a 700-bp cis-acting element that controls recombination along the left arm of chromosome III. The protein is Fork head protein homolog 1 of Saccharomyces cerevisiae (strain ATCC 204508 / S288c) (Baker's yeast).